We begin with the raw amino-acid sequence, 320 residues long: Olfactory receptor 10J1 (320 aa).

Topologically, residues 1–36 (MLLCFRFGNQSMKRENFTLITDFVFQGFSSFHEQQI) are extracellular. Residues N9 and N16 are each glycosylated (N-linked (GlcNAc...) asparagine). The helical transmembrane segment at 37 to 57 (TLFGVFLALYILTLAGNIIIV) threads the bilayer. Topologically, residues 58–65 (TIIRMDLH) are cytoplasmic. The helical transmembrane segment at 66-86 (LHTPMYFFLSMLSTSETVYTL) threads the bilayer. Over 87–110 (VILPRMLSSLVGMSQPISLAGCAT) the chain is Extracellular. C108 and C199 are disulfide-bonded. The chain crosses the membrane as a helical span at residues 111-131 (QMFFFVTFGITNCFLLTAMGY). Residues 132 to 150 (DRYVAICNPLRYMVIMNKR) are Cytoplasmic-facing. The helical transmembrane segment at 151–171 (LRIQLVLGACSIGLIVAITQV) threads the bilayer. Topologically, residues 172–207 (TSVFRLPFCARKVPHFFCDIRPVMKLSCIDTTVNEI) are extracellular. A helical membrane pass occupies residues 208–227 (LTLIISVLVLVVPMGLVFIS). The Cytoplasmic portion of the chain corresponds to 228-247 (YVLIISTILKIASVEGRKKA). A helical membrane pass occupies residues 248 to 268 (FATCASHLTVVIVHYSCASIA). Over 269–281 (YLKPKSENTREHD) the chain is Extracellular. A helical transmembrane segment spans residues 282–302 (QLISVTYTVITPLLNPVVYTL). The Cytoplasmic segment spans residues 303 to 320 (RNKEVKDALCRAVGGKFS).

This sequence belongs to the G-protein coupled receptor 1 family.

The protein resides in the cell membrane. Functionally, odorant receptor. In Homo sapiens (Human), this protein is Olfactory receptor 10J1 (OR10J1).